The following is a 515-amino-acid chain: tRNA pseudouridine synthase Pus10 (515 aa).

Zn(2+)-binding residues include Cys21 and Cys24. The stretch at 42–85 (KEVTYELQKYLSHGDPAEENDTPPSKKAKIEEDTSSNEHLGNCE) forms a coiled coil. Residues 55–82 (GDPAEENDTPPSKKAKIEEDTSSNEHLG) form a disordered region. Residues Cys96 and Cys99 each coordinate Zn(2+). Positions 291 to 304 (TPWIIDGERKIESS) are RNA binding forefinger loop. Asp331 (nucleophile) is an active-site residue. The tract at residues 428–443 (QKTPLRVLHRRPLASR) is RNA binding thumb loop.

Belongs to the pseudouridine synthase Pus10 family.

The protein localises to the nucleus. Its subcellular location is the cytoplasm. It is found in the mitochondrion. The enzyme catalyses uridine(55) in tRNA = pseudouridine(55) in tRNA. It catalyses the reaction uridine(54) in tRNA = pseudouridine(54) in tRNA. Protein with different functions depending on its subcellular location: involved in miRNA processing in the nucleus and acts as a tRNA pseudouridylate synthase in the cytoplasm. In the cytoplasm, acts as a pseudouridylate synthase by catalyzing synthesis of pseudouridine(54) and pseudouridine(55) from uracil-54 and uracil-55, respectively, in the psi GC loop of a subset of tRNAs. tRNA pseudouridylate synthase activity is enhanced by the presence of 1-methyladenosine at position 53-61 of tRNAs. Does not show tRNA pseudouridylate synthase activity in the nucleus. In the nucleus, promotes primary microRNAs (pri-miRNAs) processing independently of its RNA pseudouridylate synthase activity. Binds pri-miRNAs. This chain is tRNA pseudouridine synthase Pus10, found in Xenopus laevis (African clawed frog).